The primary structure comprises 232 residues: Phosphoribosylformylglycinamidine synthase subunit PurQ (232 aa).

The Glutamine amidotransferase type-1 domain maps to Lys-2–Phe-232. Cys-86 serves as the catalytic Nucleophile. Active-site residues include His-203 and Glu-205.

As to quaternary structure, part of the FGAM synthase complex composed of 1 PurL, 1 PurQ and 2 PurS subunits.

The protein resides in the cytoplasm. It catalyses the reaction N(2)-formyl-N(1)-(5-phospho-beta-D-ribosyl)glycinamide + L-glutamine + ATP + H2O = 2-formamido-N(1)-(5-O-phospho-beta-D-ribosyl)acetamidine + L-glutamate + ADP + phosphate + H(+). It carries out the reaction L-glutamine + H2O = L-glutamate + NH4(+). Its pathway is purine metabolism; IMP biosynthesis via de novo pathway; 5-amino-1-(5-phospho-D-ribosyl)imidazole from N(2)-formyl-N(1)-(5-phospho-D-ribosyl)glycinamide: step 1/2. In terms of biological role, part of the phosphoribosylformylglycinamidine synthase complex involved in the purines biosynthetic pathway. Catalyzes the ATP-dependent conversion of formylglycinamide ribonucleotide (FGAR) and glutamine to yield formylglycinamidine ribonucleotide (FGAM) and glutamate. The FGAM synthase complex is composed of three subunits. PurQ produces an ammonia molecule by converting glutamine to glutamate. PurL transfers the ammonia molecule to FGAR to form FGAM in an ATP-dependent manner. PurS interacts with PurQ and PurL and is thought to assist in the transfer of the ammonia molecule from PurQ to PurL. This is Phosphoribosylformylglycinamidine synthase subunit PurQ from Methanosarcina mazei (strain ATCC BAA-159 / DSM 3647 / Goe1 / Go1 / JCM 11833 / OCM 88) (Methanosarcina frisia).